Consider the following 258-residue polypeptide: Glucose 1-dehydrogenase 2 (258 aa).

11 to 35 (IVTGSSKGIGKAIAERFGKEKMNVV) contacts NADP(+). Ser146 serves as a coordination point for substrate. Catalysis depends on Tyr159, which acts as the Proton acceptor.

Belongs to the short-chain dehydrogenases/reductases (SDR) family. Homotetramer.

It carries out the reaction D-glucose + NAD(+) = D-glucono-1,5-lactone + NADH + H(+). The catalysed reaction is D-glucose + NADP(+) = D-glucono-1,5-lactone + NADPH + H(+). This Bacillus subtilis (strain 168) protein is Glucose 1-dehydrogenase 2 (ycdF).